The chain runs to 366 residues: MVIKFLSALILLLVTTAAQAERIRDLTSVQGVRQNSLIGYGLVVGLDGTGDQTTQTPFTTQTLNNMLSQLGITVPTGTNMQLKNVAAVMVTASLPPFGRQGQTIDVVVSSMGNAKSLRGGTLLMTPLKGVDSQVYALAQGNILVGGAGASAGGSSVQVNQLNGGRITNGAVIERELPSQFGVGNTLNLQLNDEDFSMAQQIADTINRVRGYGSATALDARAIQVRVPSGNSSQVRFLADIQNMQVNVTPQDAKVVINSRTGSVVMNREVTLDSCAVAQGNLSVTVNRQANVSQPDTPFGGGQTVVTPQTQIDLRQSGGSLQSVRSSASLNNVVRALNALGATPMDLMSILQSMQSAGCLRAKLEII.

The N-terminal stretch at Met-1–Ala-20 is a signal peptide.

It belongs to the FlgI family. In terms of assembly, the basal body constitutes a major portion of the flagellar organelle and consists of four rings (L,P,S, and M) mounted on a central rod.

It localises to the periplasm. It is found in the bacterial flagellum basal body. Functionally, assembles around the rod to form the L-ring and probably protects the motor/basal body from shearing forces during rotation. This Escherichia coli (strain SE11) protein is Flagellar P-ring protein.